The chain runs to 213 residues: Protein ORF D (213 aa).

This is Protein ORF D from Elephas maximus (Indian elephant).